Consider the following 432-residue polypeptide: Cyclic di-GMP phosphodiesterase CdgJ (432 aa).

One can recognise an EAL domain in the interval 1–232; sequence MVRCLWAAEC…QRYVSPEHVI (232 aa). The region spanning 226–413 is the HDOD domain; that stretch reads VSPEHVIAMQ…CLELGFDLED (188 aa).

The catalysed reaction is 3',3'-c-di-GMP + H2O = 5'-phosphoguanylyl(3'-&gt;5')guanosine + H(+). Phosphodiesterase (PDE) that catalyzes the hydrolysis of cyclic diguanylate (c-di-GMP). Positively regulates motility and negatively regulates biofilm formation. This Vibrio cholerae serotype O1 (strain ATCC 39315 / El Tor Inaba N16961) protein is Cyclic di-GMP phosphodiesterase CdgJ.